The sequence spans 371 residues: MAHRVLLLLSLASAAAVAAAVDAEDPLIRQVVPGGDDNDLELNAESHFLSFVQRFGKSYKDADEHAYRLSVFKDNLRRARRHQLLDPSAEHGVTKFSDLTPAEFRRTYLGLRKSRRALLRELGESAHEAPVLPTDGLPDDFDWRDHGAVGPVKNQGSCGSCWSFSASGALEGAHYLATGKLEVLSEQQFVDCDHECDSSEPDSCDSGCNGGLMTTAFSYLQKAGGLESEKDYPYTGSDGKCKFDKSKIVASVQNFSVVSVDEAQISANLIKHGPLAIGINAAYMQTYIGGVSCPYICGRHLDHGVLLVGYGASGFAPIRLKDKPYWIIKNSWGENWGENGYYKICRGSNVRNKCGVDSMVSTVSAVHASKE.

The N-terminal stretch at 1–18 (MAHRVLLLLSLASAAAVA) is a signal peptide. A propeptide spans 19-136 (AAVDAEDPLI…HEAPVLPTDG (118 aa)) (activation peptide). Intrachain disulfides connect Cys-158–Cys-208 and Cys-192–Cys-241. Cys-161 is a catalytic residue. Asn-254 carries an N-linked (GlcNAc...) asparagine glycan. An intrachain disulfide couples Cys-297 to Cys-354. Active-site residues include His-303 and Asn-330.

This sequence belongs to the peptidase C1 family. Expressed during the late stages of seed ripening, in mature seeds and during germination.

Involved in the degradation of the storage protein zein. May play a role in proteolysis during emergencies. This is Cysteine proteinase 1 (CCP1) from Zea mays (Maize).